The chain runs to 258 residues: Regulatory protein RecX (258 aa).

Belongs to the RecX family.

It localises to the cytoplasm. Its function is as follows. Modulates RecA activity. This Streptococcus pyogenes serotype M3 (strain ATCC BAA-595 / MGAS315) protein is Regulatory protein RecX.